A 279-amino-acid chain; its full sequence is Putative short-chain type dehydrogenase/reductase MSMEG_6031/MSMEI_5872 (279 aa).

NAD(+) is bound at residue 11–33 (FITGAARGQGRSHAVRLAEEGAD). Residue Lys65 forms an Isoglutamyl lysine isopeptide (Lys-Gln) (interchain with Q-Cter in protein Pup) linkage. Residue Ser158 coordinates substrate. Tyr171 serves as the catalytic Proton acceptor.

The protein belongs to the short-chain dehydrogenases/reductases (SDR) family.

This chain is Putative short-chain type dehydrogenase/reductase MSMEG_6031/MSMEI_5872, found in Mycolicibacterium smegmatis (strain ATCC 700084 / mc(2)155) (Mycobacterium smegmatis).